Here is a 304-residue protein sequence, read N- to C-terminus: E3 ubiquitin-protein ligase CHIP (304 aa).

A compositionally biased stretch (basic and acidic residues) spans M1–G10. The tract at residues M1–L30 is disordered. A Glycyl lysine isopeptide (Lys-Gly) (interchain with G-Cter in ubiquitin) cross-link involves residue K2. The span at A11–S20 shows a compositional bias: gly residues. Phosphoserine is present on S20. Residue K23 forms a Glycyl lysine isopeptide (Lys-Gly) (interchain with G-Cter in ubiquitin) linkage. A phosphoserine mark is found at S24 and S26. TPR repeat units lie at residues A27 to V60, A61 to S94, and K96 to Q128. Positions G102 to I201 are required for interaction with MAPK7. A required for interaction with and ubiquitination of MYOCD region spans residues A143 to Q197. Residues K144–Q198 form a required for interaction with FOXO1 region. The segment at K144 to Y304 is required for ubiquitination of FOXO1. Residue S150 is modified to Phosphoserine. Residues K222 and K256 each participate in a glycyl lysine isopeptide (Lys-Gly) (interchain with G-Cter in ubiquitin) cross-link. Residues D227–V301 enclose the U-box domain. S274 is modified (phosphoserine).

Homodimer. Interacts with BAG2, and with the E2 ubiquitin conjugating enzymes UBE2D1, UBE2D2 and UBE2D3. Detected in a ternary complex containing STUB1, HSPA1A and HSPBP1. Part of a complex composed of STUB1/CHIP, VCP/p97, CHRNA3, and UBXN2A that modulates the ubiquitination and endoplasmic reticulum-associated degradation (ERAD) of CHRNA3. Within the complex UBXN2A acts as a scaffold protein required for the interaction of CHRNA3 with VCP/p97, this interaction also inhibits CHRNA3 ubiquitination by STUB1/CHIP and subsequently ERAD. Interacts with MKKS. Interacts with DNAAF4. Interacts (via the U-box domain) with the UBE2V2-UBE2N heterodimer; the complex has a specific 'Lys-63'-linked polyubiquitination activity. Interacts (when monoubiquitinated) with ATXN3. Interacts with UBE2W. Interacts with DNAJB6. Interacts with FLCN and HSP90AA1. Interacts with HSP90. Interacts with UBE2N and UBE2V1. Interacts (via TPR repeats) with HSPA8 (via C-terminus). Interacts (via TPR repeats) with HSPA1A (via C-terminus). Interacts with the non-acetylated form of HSPA1A and HSPA1B. Interacts with SMAD3 and HSP90AB1. Interacts with UBE4B. Interacts with PRMT5. Interacts with MYOCD (via C-terminus). Interacts with FOXO1 (when phosphorylated on 'Ser-250'). Interacts with MAPK7/ERK5; the interaction is enhanced in the presence of IGF1 or MAP2K5 and promotes STUB1/CHIP E3 ligase activity. Interacts with and ubiquitinates ESR1; the interaction is promoted in the absence of estradiol (17-beta-estradiol/E2). Interacts with ESR2. Interacts with and ubiquitinates NFATC3; HSPA1A/HSP70 is required as a co-chaperone. In macrophages, interacts with PAQR3; the interaction promotes PPARG poylubiquitination and STUB1-mediated degradation. Component of the chaperone-assisted selective autophagy (CASA) complex consisting of BAG3, HSPA8/HSC70, HSPB8 and STUB1/CHIP. Post-translationally, auto-ubiquitinated; mediated by UBE2D1 and UBE2D2 and enhanced in the presence of MAP2K5. Monoubiquitinated at Lys-2 following cell stress by UBE2W, promoting the interaction with ATXN3. Expressed in the adventitia layer of the carotid artery (at protein level). Expressed in the CA1 region of the hippocampus (at protein level). Expressed in the uterus (at protein level).

Its subcellular location is the cytoplasm. It localises to the nucleus. It is found in the mitochondrion. It catalyses the reaction S-ubiquitinyl-[E2 ubiquitin-conjugating enzyme]-L-cysteine + [acceptor protein]-L-lysine = [E2 ubiquitin-conjugating enzyme]-L-cysteine + N(6)-ubiquitinyl-[acceptor protein]-L-lysine.. It functions in the pathway protein modification; protein ubiquitination. Its function is as follows. E3 ubiquitin-protein ligase which targets misfolded chaperone substrates towards proteasomal degradation. Plays a role in the maintenance of mitochondrial morphology and promotes mitophagic removal of dysfunctional mitochondria; thereby acts as a protector against apoptosis in response to cellular stress. Negatively regulates vascular smooth muscle contraction, via degradation of the transcriptional activator MYOCD and subsequent loss of transcription of genes involved in vascular smooth muscle contraction. Promotes survival and proliferation of cardiac smooth muscle cells via ubiquitination and degradation of FOXO1, resulting in subsequent repression of FOXO1-mediated transcription of pro-apoptotic genes. Ubiquitinates ICER-type isoforms of CREM and targets them for proteasomal degradation, thereby acts as a positive effector of MAPK/ERK-mediated inhibition of apoptosis in cardiomyocytes. Inhibits lipopolysaccharide-induced apoptosis and hypertrophy in cardiomyocytes, via ubiquitination and subsequent proteasomal degradation of NFATC3. Collaborates with ATXN3 in the degradation of misfolded chaperone substrates: ATXN3 restricting the length of ubiquitin chain attached to STUB1/CHIP substrates and preventing further chain extension. Ubiquitinates NOS1 in concert with Hsp70 and Hsp40. Modulates the activity of several chaperone complexes, including Hsp70, Hsc70 and Hsp90. Ubiquitinates CHRNA3 targeting it for endoplasmic reticulum-associated degradation in cortical neurons, as part of the STUB1-VCP-UBXN2A complex. Ubiquitinates and promotes ESR1 proteasomal degradation in response to age-related circulating estradiol (17-beta-estradiol/E2) decline, thereby promotes neuronal apoptosis in response to ischemic reperfusion injury. Mediates transfer of non-canonical short ubiquitin chains to HSPA8 that have no effect on HSPA8 degradation. Mediates polyubiquitination of DNA polymerase beta (POLB) at 'Lys-41', 'Lys-61' and 'Lys-81', thereby playing a role in base-excision repair: catalyzes polyubiquitination by amplifying the HUWE1/ARF-BP1-dependent monoubiquitination and leading to POLB-degradation by the proteasome. Mediates polyubiquitination of CYP3A4. Ubiquitinates EPHA2 and may regulate the receptor stability and activity through proteasomal degradation. Acts as a co-chaperone for HSPA1A and HSPA1B chaperone proteins and promotes ubiquitin-mediated protein degradation. Negatively regulates the suppressive function of regulatory T-cells (Treg) during inflammation by mediating the ubiquitination and degradation of FOXP3 in a HSPA1A/B-dependent manner. Catalyzes monoubiquitination of SIRT6, preventing its degradation by the proteasome. Likely mediates polyubiquitination and down-regulates plasma membrane expression of PD-L1/CD274, an immune inhibitory ligand critical for immune tolerance to self and antitumor immunity. Negatively regulates TGF-beta signaling by modulating the basal level of SMAD3 via ubiquitin-mediated degradation. Plays a role in the degradation of TP53. Mediates ubiquitination of RIPK3 leading to its subsequent proteasome-dependent degradation. May regulate myosin assembly in striated muscles together with UBE4B and VCP/p97 by targeting myosin chaperone UNC45B for proteasomal degradation. Ubiquitinates PPARG in macrophages playing a role in M2 macrophages polarization and angiogenesis. This Rattus norvegicus (Rat) protein is E3 ubiquitin-protein ligase CHIP.